The primary structure comprises 162 residues: UPF0262 protein Pden_1958 (162 aa).

The interval 1 to 22 (MSQSANRLCRIDIDDSALPPPS) is disordered.

It belongs to the UPF0262 family.

This Paracoccus denitrificans (strain Pd 1222) protein is UPF0262 protein Pden_1958.